Reading from the N-terminus, the 1533-residue chain is Protein TALPID3 (1533 aa).

A disordered region spans residues 32-57 (LSANKRLPVGTGTSLNGTSRGSSDLT). Positions 42–57 (TGTSLNGTSRGSSDLT) are enriched in polar residues. Residues 182-223 (QSDLEAKVNSVTELLSKLQETDKHLQRVTEQQTSIQRKQEKL) are a coiled coil. A compositionally biased stretch (basic and acidic residues) spans 309–321 (KEVEDTSFDKQKS). Disordered stretches follow at residues 309–339 (KEVE…VSRD) and 377–400 (LTRK…TPEK). Residue S406 is modified to Phosphoserine. Residues 467–501 (SVLKDAEKILRGVQNNKKVLEENLEAIIRAKDGAA) are a coiled coil. Residues 467 to 554 (SVLKDAEKIL…YEQKRFDQKN (88 aa)) form a required for centrosomal localization region. The tract at residues 546–575 (EQKRFDQKNQRTKKGQNMTKDIRTNTQDKT) is disordered. Polar residues predominate over residues 560–575 (GQNMTKDIRTNTQDKT). T1042 and T1046 each carry phosphothreonine. Position 1050 is a phosphoserine (S1050). T1063 carries the phosphothreonine modification. Phosphoserine is present on S1066. The disordered stretch occupies residues 1129-1156 (SSPELPKPWGDGDLPLEEENPNSPQEEL).

Belongs to the TALPID3 family. As to quaternary structure, interacts with CCP110, CEP290, CEP97, KIF24. Ubiquitously expressed. Expressed in photoreceptor cells (at protein level).

The protein localises to the cytoplasm. The protein resides in the cytoskeleton. Its subcellular location is the microtubule organizing center. It localises to the centrosome. It is found in the photoreceptor inner segment. The protein localises to the centriole. The protein resides in the cilium basal body. Its function is as follows. Required for ciliogenesis and sonic hedgehog/SHH signaling. Required for the centrosomal recruitment of RAB8A and for the targeting of centriole satellite proteins to centrosomes such as of PCM1. May play a role in early ciliogenesis in the disappearance of centriolar satellites that preceeds ciliary vesicle formation. Involved in regulation of cell intracellular organization. Involved in regulation of cell polarity. Required for asymmetrical localization of CEP120 to daughter centrioles. The polypeptide is Protein TALPID3 (KIAA0586) (Homo sapiens (Human)).